A 136-amino-acid polypeptide reads, in one-letter code: ATP synthase epsilon chain, chloroplastic (136 aa).

Belongs to the ATPase epsilon chain family. As to quaternary structure, F-type ATPases have 2 components, CF(1) - the catalytic core - and CF(0) - the membrane proton channel. CF(1) has five subunits: alpha(3), beta(3), gamma(1), delta(1), epsilon(1). CF(0) has three main subunits: a, b and c.

It is found in the plastid. The protein resides in the chloroplast thylakoid membrane. In terms of biological role, produces ATP from ADP in the presence of a proton gradient across the membrane. The protein is ATP synthase epsilon chain, chloroplastic of Cucumis sativus (Cucumber).